The following is a 176-amino-acid chain: ATP synthase subunit delta (176 aa).

The protein belongs to the ATPase delta chain family. In terms of assembly, F-type ATPases have 2 components, F(1) - the catalytic core - and F(0) - the membrane proton channel. F(1) has five subunits: alpha(3), beta(3), gamma(1), delta(1), epsilon(1). F(0) has three main subunits: a(1), b(2) and c(10-14). The alpha and beta chains form an alternating ring which encloses part of the gamma chain. F(1) is attached to F(0) by a central stalk formed by the gamma and epsilon chains, while a peripheral stalk is formed by the delta and b chains.

Its subcellular location is the cell inner membrane. In terms of biological role, f(1)F(0) ATP synthase produces ATP from ADP in the presence of a proton or sodium gradient. F-type ATPases consist of two structural domains, F(1) containing the extramembraneous catalytic core and F(0) containing the membrane proton channel, linked together by a central stalk and a peripheral stalk. During catalysis, ATP synthesis in the catalytic domain of F(1) is coupled via a rotary mechanism of the central stalk subunits to proton translocation. Functionally, this protein is part of the stalk that links CF(0) to CF(1). It either transmits conformational changes from CF(0) to CF(1) or is implicated in proton conduction. In Wolinella succinogenes (strain ATCC 29543 / DSM 1740 / CCUG 13145 / JCM 31913 / LMG 7466 / NCTC 11488 / FDC 602W) (Vibrio succinogenes), this protein is ATP synthase subunit delta.